Here is a 446-residue protein sequence, read N- to C-terminus: Na(+)-translocating NADH-quinone reductase subunit A (446 aa).

Belongs to the NqrA family. In terms of assembly, composed of six subunits; NqrA, NqrB, NqrC, NqrD, NqrE and NqrF.

The enzyme catalyses a ubiquinone + n Na(+)(in) + NADH + H(+) = a ubiquinol + n Na(+)(out) + NAD(+). Its function is as follows. NQR complex catalyzes the reduction of ubiquinone-1 to ubiquinol by two successive reactions, coupled with the transport of Na(+) ions from the cytoplasm to the periplasm. NqrA to NqrE are probably involved in the second step, the conversion of ubisemiquinone to ubiquinol. The protein is Na(+)-translocating NADH-quinone reductase subunit A of Vibrio vulnificus (strain CMCP6).